The chain runs to 549 residues: Glucose-6-phosphate isomerase (549 aa).

Lys80, Lys228, and Lys234 each carry N6-acetyllysine. Glu355 (proton donor) is an active-site residue. Residues His386 and Lys514 contribute to the active site.

Belongs to the GPI family.

Its subcellular location is the cytoplasm. The enzyme catalyses alpha-D-glucose 6-phosphate = beta-D-fructose 6-phosphate. Its pathway is carbohydrate biosynthesis; gluconeogenesis. It functions in the pathway carbohydrate degradation; glycolysis; D-glyceraldehyde 3-phosphate and glycerone phosphate from D-glucose: step 2/4. Catalyzes the reversible isomerization of glucose-6-phosphate to fructose-6-phosphate. The sequence is that of Glucose-6-phosphate isomerase from Escherichia coli O17:K52:H18 (strain UMN026 / ExPEC).